The sequence spans 89 residues: MTIKLINIGFGNIISANRMISIVSPESAPIKRMIQDARDRGMLIDATYGRRTRAVVIMDSDHVILSAVQPETVAQRLSVKEEIIDEGQG.

It belongs to the RemA family.

The sequence is that of Putative regulatory protein BPUM_1466 from Bacillus pumilus (strain SAFR-032).